A 271-amino-acid polypeptide reads, in one-letter code: Endonuclease V (271 aa).

The tract at residues 46–67 (TRTGDAPDVDQTTLSTSADDRT) is disordered. D76 and D140 together coordinate Mg(2+).

This sequence belongs to the endonuclease V family. It depends on Mg(2+) as a cofactor.

The protein localises to the cytoplasm. It catalyses the reaction Endonucleolytic cleavage at apurinic or apyrimidinic sites to products with a 5'-phosphate.. In terms of biological role, DNA repair enzyme involved in the repair of deaminated bases. Selectively cleaves double-stranded DNA at the second phosphodiester bond 3' to a deoxyinosine leaving behind the intact lesion on the nicked DNA. This chain is Endonuclease V, found in Haloarcula marismortui (strain ATCC 43049 / DSM 3752 / JCM 8966 / VKM B-1809) (Halobacterium marismortui).